The primary structure comprises 469 residues: Type II secretion system protein HxcR (469 aa).

Residue 246-253 participates in ATP binding; sequence GPTGSGKT.

This sequence belongs to the GSP E family.

The protein resides in the cytoplasm. The enzyme catalyses ATP + H2O + cellular proteinSide 1 = ADP + phosphate + cellular proteinSide 2.. Its function is as follows. ATPase component of the type II secretion system required for the energy-dependent secretion of extracellular factors from the periplasm. Acts as a molecular motor to provide the energy that is required for the export of proteins. The Hxc system is involved in the secretion of low-molecular-weight alkaline phosphatase L-AP (LapA). Is probably also involved in the secretion of the phosphate-binding protein PstS. The chain is Type II secretion system protein HxcR from Pseudomonas aeruginosa (strain ATCC 15692 / DSM 22644 / CIP 104116 / JCM 14847 / LMG 12228 / 1C / PRS 101 / PAO1).